The primary structure comprises 183 residues: Large ribosomal subunit protein uL18 (183 aa).

It belongs to the universal ribosomal protein uL18 family. As to quaternary structure, part of the 50S ribosomal subunit. Contacts the 5S and 23S rRNAs.

In terms of biological role, this is one of the proteins that bind and probably mediate the attachment of the 5S RNA into the large ribosomal subunit, where it forms part of the central protuberance. This chain is Large ribosomal subunit protein uL18, found in Halobacterium salinarum (strain ATCC 29341 / DSM 671 / R1).